A 548-amino-acid polypeptide reads, in one-letter code: Probable malate:quinone oxidoreductase (548 aa).

The segment at 521 to 548 (DKPQAADSTPKPQLKPQPVQKEVADIAL) is disordered. Over residues 530–541 (PKPQLKPQPVQK) the composition is skewed to low complexity.

This sequence belongs to the MQO family. FAD is required as a cofactor.

It carries out the reaction (S)-malate + a quinone = a quinol + oxaloacetate. The protein operates within carbohydrate metabolism; tricarboxylic acid cycle; oxaloacetate from (S)-malate (quinone route): step 1/1. This is Probable malate:quinone oxidoreductase from Escherichia coli O139:H28 (strain E24377A / ETEC).